A 150-amino-acid polypeptide reads, in one-letter code: Large ribosomal subunit protein bL9 (150 aa).

This sequence belongs to the bacterial ribosomal protein bL9 family.

In terms of biological role, binds to the 23S rRNA. The polypeptide is Large ribosomal subunit protein bL9 (Burkholderia vietnamiensis (strain G4 / LMG 22486) (Burkholderia cepacia (strain R1808))).